The sequence spans 428 residues: Enolase (428 aa).

Residue glutamine 162 coordinates (2R)-2-phosphoglycerate. Glutamate 204 (proton donor) is an active-site residue. Mg(2+) contacts are provided by aspartate 241, glutamate 283, and aspartate 310. Residues lysine 335, arginine 364, serine 365, and lysine 386 each contribute to the (2R)-2-phosphoglycerate site. Lysine 335 acts as the Proton acceptor in catalysis.

Belongs to the enolase family. Mg(2+) serves as cofactor.

Its subcellular location is the cytoplasm. The protein resides in the secreted. It localises to the cell surface. It catalyses the reaction (2R)-2-phosphoglycerate = phosphoenolpyruvate + H2O. The protein operates within carbohydrate degradation; glycolysis; pyruvate from D-glyceraldehyde 3-phosphate: step 4/5. In terms of biological role, catalyzes the reversible conversion of 2-phosphoglycerate (2-PG) into phosphoenolpyruvate (PEP). It is essential for the degradation of carbohydrates via glycolysis. The protein is Enolase of Rhodococcus erythropolis (strain PR4 / NBRC 100887).